Reading from the N-terminus, the 278-residue chain is Probable endonuclease 4 (278 aa).

9 residues coordinate Zn(2+): His66, His106, Glu140, Asp172, His175, His209, Asp222, His224, and Glu254.

This sequence belongs to the AP endonuclease 2 family. The cofactor is Zn(2+).

It carries out the reaction Endonucleolytic cleavage to 5'-phosphooligonucleotide end-products.. Endonuclease IV plays a role in DNA repair. It cleaves phosphodiester bonds at apurinic or apyrimidinic (AP) sites, generating a 3'-hydroxyl group and a 5'-terminal sugar phosphate. The polypeptide is Probable endonuclease 4 (Haloquadratum walsbyi (strain DSM 16790 / HBSQ001)).